A 185-amino-acid chain; its full sequence is Elongation factor P (185 aa).

This sequence belongs to the elongation factor P family.

It localises to the cytoplasm. Its pathway is protein biosynthesis; polypeptide chain elongation. Involved in peptide bond synthesis. Stimulates efficient translation and peptide-bond synthesis on native or reconstituted 70S ribosomes in vitro. Probably functions indirectly by altering the affinity of the ribosome for aminoacyl-tRNA, thus increasing their reactivity as acceptors for peptidyl transferase. This is Elongation factor P from Desulfitobacterium hafniense (strain Y51).